The following is a 641-amino-acid chain: SUMO-activating enzyme subunit 2 (641 aa).

ATP contacts are provided by residues 24–29 (GAGGIG), D48, 56–59 (NLNR), K72, 95–96 (SI), and 117–122 (DNNAAR). Zn(2+) contacts are provided by C158 and C161. The active-site Glycyl thioester intermediate is C173. K190 is covalently cross-linked (Glycyl lysine isopeptide (Lys-Gly) (interchain with G-Cter in SUMO)). Residue K236 forms a Glycyl lysine isopeptide (Lys-Gly) (interchain with G-Cter in SUMO1) linkage. Residues K257 and K275 each participate in a glycyl lysine isopeptide (Lys-Gly) (interchain with G-Cter in SUMO) cross-link. Residues C439 and C442 each contribute to the Zn(2+) site. A disordered region spans residues 546–641 (GDVPEKGPQK…EEDDDIIALD (96 aa)). Over residues 556–579 (PSEQSVKNITNGSDDGAQPSTSKA) the composition is skewed to polar residues. The span at 582–594 (QDDVLIVDSDEES) shows a compositional bias: acidic residues. Glycyl lysine isopeptide (Lys-Gly) (interchain with G-Cter in SUMO) cross-links involve residues K610, K612, and K623. The span at 630-641 (PVEEDDDIIALD) shows a compositional bias: acidic residues.

Belongs to the ubiquitin-activating E1 family. As to quaternary structure, heterodimer of sae1 and uba2/sae2. The heterodimer corresponds to the two domains that are encoded on a single polypeptide chain in ubiquitin-activating enzyme E1. Interacts with ube2i. Sumoylated with SUMO1 and SUMO2/3 and by UBC9. Sumoylation at Lys-236 inhibits enzymatic activity. Sumoylation at the C-terminal lysine cluster plays an essential role in nuclear trafficking.

It is found in the cytoplasm. The protein resides in the nucleus. The protein operates within protein modification; protein sumoylation. The heterodimer acts as an E1 ligase for sumo1, sumo2, and sumo3. It mediates ATP-dependent activation of sumo proteins followed by formation of a thioester bond between a sumo protein and a conserved active site cysteine residue on uba2/sae2. In Xenopus tropicalis (Western clawed frog), this protein is SUMO-activating enzyme subunit 2 (uba2).